The primary structure comprises 749 residues: MTTTIIGFPRIGEHRELKFITEKYFRNEIPQEELLEAAKDLRAKHWNIVKEAGITEIPSNDFSHYDNVLDAAVLFNIIPKAVQDLELTDLEKYFALARGYQGEKGDVRARPMKKWFNTNYHYIVPAIEKDTEIKLAGHKIFDEFQEAKNLGITTRPVLIGPFTLLQLTDFEEGLTATNFADSLVAAYGQVFEKLAELGAEKIQLDEPSLVKDLTAEEKALFLRIYQTLLADKKGLQVLIQTYFGDVRDIYTELTSLPVDAIGLDFVEGKETAALVATGFPADKTLYAGIVNGKNIWRNNYEKSLAVLDAIPAENVVITTSCSLLHVPFTTANEEFEPAILNHFAFAVEKLSELRDLDAIRNGQGEVALTANKELFALERVGRDAALADRLAGLTDTDYTRLPVFAERESIQREKLNLPLLPTTTIGSFPQTKEVRSTRLAFRKGNISEEEYDAFVKTQTDEWIAWQEEVDFDVLVHGEFERNDMVEYFGENLSGYLFSKNGWVQSYGMRGVKPPIIWGDVTRLNPITVKWSSYAQSRTNKPVKGMLTGPVTILNWSFPREDISIKESTLQIALAIKEEVLDLEAAGIKIIQIDEAALREKLPLRRSDWYSEYLDWAIPAFRLVHSTVAPDTQIHTHMCYSEFTDIIPAIDNMDADVISFEASRSNLVILDELKAKNFQTQVGPGVYDIHSPRVPAVDEIAHTIQAILAKVPKEKVWINPDCGLKTRGESETKASLIHLTQAAKAARKEL.

5-methyltetrahydropteroyltri-L-glutamate contacts are provided by residues 15–18 (RELK) and K114. L-homocysteine is bound by residues 425–427 (IGS) and E478. Residues 425 to 427 (IGS) and E478 contribute to the L-methionine site. Position 555 (W555) interacts with 5-methyltetrahydropteroyltri-L-glutamate. D593 is a binding site for L-homocysteine. D593 serves as a coordination point for L-methionine. E599 lines the 5-methyltetrahydropteroyltri-L-glutamate pocket. The Zn(2+) site is built by H636, C638, and E660. H689 acts as the Proton donor in catalysis. C721 is a binding site for Zn(2+).

This sequence belongs to the vitamin-B12 independent methionine synthase family. The cofactor is Zn(2+).

It carries out the reaction 5-methyltetrahydropteroyltri-L-glutamate + L-homocysteine = tetrahydropteroyltri-L-glutamate + L-methionine. Its pathway is amino-acid biosynthesis; L-methionine biosynthesis via de novo pathway; L-methionine from L-homocysteine (MetE route): step 1/1. Its function is as follows. Catalyzes the transfer of a methyl group from 5-methyltetrahydrofolate to homocysteine resulting in methionine formation. This is 5-methyltetrahydropteroyltriglutamate--homocysteine methyltransferase from Streptococcus suis (strain 05ZYH33).